Consider the following 272-residue polypeptide: Flt3 receptor-interacting lectin (272 aa).

A signal peptide spans 1–8; that stretch reads MFPSKVKS. 2 residues coordinate alpha-D-mannopyranose: D94 and G112. N125 and N131 each carry an N-linked (GlcNAc...) asparagine glycan. Alpha-D-mannopyranose is bound by residues N152 and 237–238; that span reads QD.

The protein belongs to the leguminous lectin family. Dimer (alpha/beta)2. Tetramer (alpha/beta)4. Glycosylated at Asn-125 by either a paucimannose type N-glycan (alpha-4) or a single N-acetylglucosamine (alpha-3). Glycosylated at Asn-131 by a paucimannose type N-glycan (alpha-2, alpha-3 and alpha-4). In alpha-2, Asn-125 is deamidated to an Asp, possibly due to the action of intrinsic peptide N-glycosidase (PGNase).

It localises to the protein storage vacuole lumen. Mannose-binding lectin. Accommodates most effectively a non-reducing terminal alpha-d-mannosyl unit. Strongly precipitates murine IgM but not IgG. The chain is Flt3 receptor-interacting lectin from Lablab purpureus (Hyacinth bean).